A 129-amino-acid chain; its full sequence is Small ribosomal subunit protein uS9 (129 aa).

It belongs to the universal ribosomal protein uS9 family.

This is Small ribosomal subunit protein uS9 from Pelodictyon phaeoclathratiforme (strain DSM 5477 / BU-1).